The sequence spans 471 residues: tRNA-2-methylthio-N(6)-dimethylallyladenosine synthase (471 aa).

The MTTase N-terminal domain maps to lysine 36 to threonine 154. Residues cysteine 45, cysteine 81, cysteine 115, cysteine 191, cysteine 195, and cysteine 198 each coordinate [4Fe-4S] cluster. The Radical SAM core domain occupies arginine 177–lysine 407. Positions glutamine 410–isoleucine 471 constitute a TRAM domain.

The protein belongs to the methylthiotransferase family. MiaB subfamily. Monomer. [4Fe-4S] cluster serves as cofactor.

The protein resides in the cytoplasm. It catalyses the reaction N(6)-dimethylallyladenosine(37) in tRNA + (sulfur carrier)-SH + AH2 + 2 S-adenosyl-L-methionine = 2-methylsulfanyl-N(6)-dimethylallyladenosine(37) in tRNA + (sulfur carrier)-H + 5'-deoxyadenosine + L-methionine + A + S-adenosyl-L-homocysteine + 2 H(+). Its function is as follows. Catalyzes the methylthiolation of N6-(dimethylallyl)adenosine (i(6)A), leading to the formation of 2-methylthio-N6-(dimethylallyl)adenosine (ms(2)i(6)A) at position 37 in tRNAs that read codons beginning with uridine. The polypeptide is tRNA-2-methylthio-N(6)-dimethylallyladenosine synthase (Caldicellulosiruptor saccharolyticus (strain ATCC 43494 / DSM 8903 / Tp8T 6331)).